The sequence spans 425 residues: Serine hydroxymethyltransferase 2 (425 aa).

Residues Leu121 and 125–127 (GHL) contribute to the (6S)-5,6,7,8-tetrahydrofolate site. The residue at position 230 (Lys230) is an N6-(pyridoxal phosphate)lysine.

Belongs to the SHMT family. As to quaternary structure, homodimer. It depends on pyridoxal 5'-phosphate as a cofactor.

The protein localises to the cytoplasm. The catalysed reaction is (6R)-5,10-methylene-5,6,7,8-tetrahydrofolate + glycine + H2O = (6S)-5,6,7,8-tetrahydrofolate + L-serine. Its pathway is one-carbon metabolism; tetrahydrofolate interconversion. It participates in amino-acid biosynthesis; glycine biosynthesis; glycine from L-serine: step 1/1. In terms of biological role, catalyzes the reversible interconversion of serine and glycine with tetrahydrofolate (THF) serving as the one-carbon carrier. This reaction serves as the major source of one-carbon groups required for the biosynthesis of purines, thymidylate, methionine, and other important biomolecules. Also exhibits THF-independent aldolase activity toward beta-hydroxyamino acids, producing glycine and aldehydes, via a retro-aldol mechanism. In Mycobacterium tuberculosis (strain CDC 1551 / Oshkosh), this protein is Serine hydroxymethyltransferase 2.